Here is a 225-residue protein sequence, read N- to C-terminus: Small ribosomal subunit protein uS3 (225 aa).

The KH type-2 domain occupies 16-85; it reads VYEYLVKETE…TPQIEVKDVK (70 aa). A disordered region spans residues 200–225; sequence GENVGTESETDKADEQGREAANTEES. Basic and acidic residues predominate over residues 208-217; the sequence is ETDKADEQGR.

It belongs to the universal ribosomal protein uS3 family. As to quaternary structure, part of the 30S ribosomal subunit.

Binds the lower part of the 30S subunit head. The polypeptide is Small ribosomal subunit protein uS3 (Thermoplasma volcanium (strain ATCC 51530 / DSM 4299 / JCM 9571 / NBRC 15438 / GSS1)).